Consider the following 162-residue polypeptide: Toluate 1,2-dioxygenase subunit beta (162 aa).

Belongs to the bacterial ring-hydroxylating dioxygenase beta subunit family. This dioxygenase system consists of three proteins: the two subunits of the hydroxylase component (XylX and XylY), and an electron transfer component (XylZ).

It functions in the pathway xenobiotic degradation; toluene degradation. The chain is Toluate 1,2-dioxygenase subunit beta (xylY) from Pseudomonas putida (Arthrobacter siderocapsulatus).